A 328-amino-acid polypeptide reads, in one-letter code: Olfactory receptor 2AJ1 (328 aa).

Residues 1-25 (MGHQNHTFSSDFILLGLFSSSPTSV) are Extracellular-facing. The N-linked (GlcNAc...) asparagine glycan is linked to N5. The chain crosses the membrane as a helical span at residues 26 to 49 (VFFLVLFVIFIMSVTENTLMILLI). Topologically, residues 50 to 57 (RSDSRLHT) are cytoplasmic. Residues 58–79 (PMYFLLSHLSLMDILHVSNIVP) form a helical membrane-spanning segment. At 80–100 (KMVTNFLSGSRTISFAGCGFQ) the chain is on the extracellular side. The cysteines at positions 97 and 189 are disulfide-linked. Residues 101 to 120 (VFLSLTLLGGECLLLAAMSC) form a helical membrane-spanning segment. The Cytoplasmic portion of the chain corresponds to 121 to 139 (DRYVAICHPLRYPILMKEY). A helical membrane pass occupies residues 140 to 158 (ASALMAGGSWLIGVFNSTV). Residues 159–195 (HTAYALQFPFCGSRAIDHFFCEVPAMLKLSCADTTRY) lie on the Extracellular side of the membrane. A helical transmembrane segment spans residues 196–219 (ERGVCVSAVIFLLIPFSLISASYG). Over 220–236 (QIILTVLQMKSSEARKK) the chain is Cytoplasmic. A helical transmembrane segment spans residues 237-259 (SFSTCSFHMIVVTMYYGPFIFTY). The Extracellular portion of the chain corresponds to 260–272 (MRPKSYHTPGQDK). Residues 273–292 (FLAIFYTILTPTLNPFIYSF) traverse the membrane as a helical segment. The Cytoplasmic segment spans residues 293-328 (RNKDVLAVMKNMLKSNFLHKKMNRKIPECVFCLFLC).

The protein belongs to the G-protein coupled receptor 1 family.

It is found in the cell membrane. Odorant receptor. The protein is Olfactory receptor 2AJ1 (OR2AJ1) of Homo sapiens (Human).